Consider the following 710-residue polypeptide: F-box only protein 40 (710 aa).

The TRAF-type zinc-finger motif lies at 53–114; the sequence is EHTLLCPLEQ…VDSETFLHEN (62 aa). Disordered stretches follow at residues 152 to 174 and 234 to 279; these read DATE…GAVG and GSLG…SQEL. Over residues 238–248 the composition is skewed to basic and acidic residues; the sequence is KSEDKNGDVAG. The region spanning 572 to 626 is the F-box domain; the sequence is LNSLTSLPLEVLQYIAGFLDSISLSQLSQVSVLMRNICATLLQERGMVLSQWKKK.

Directly interacts with SKP1 and CUL1. In terms of tissue distribution, expressed only in heart and skeletal muscle.

The protein localises to the cytoplasm. Its function is as follows. Probable substrate-recognition component of the SCF (SKP1-CUL1-F-box protein)-type E3 ubiquitin ligase complex that may function in myogenesis. The sequence is that of F-box only protein 40 (Fbxo40) from Mus musculus (Mouse).